A 211-amino-acid chain; its full sequence is FMN-dependent NADH:quinone oxidoreductase 2 (211 aa).

FMN is bound at residue 17-19; sequence SYS.

This sequence belongs to the azoreductase type 1 family. In terms of assembly, homodimer. FMN serves as cofactor.

The enzyme catalyses 2 a quinone + NADH + H(+) = 2 a 1,4-benzosemiquinone + NAD(+). It catalyses the reaction N,N-dimethyl-1,4-phenylenediamine + anthranilate + 2 NAD(+) = 2-(4-dimethylaminophenyl)diazenylbenzoate + 2 NADH + 2 H(+). Its activity is regulated as follows. Strongly inhibited by Pb(2+) and weakly inhibited by Cu(2+), Hg(2+) and Fe(2+). Stable in presence of Ag(+). In terms of biological role, quinone reductase that provides resistance to thiol-specific stress caused by electrophilic quinones. Contributes to resistance to 2-methylhydroquinone (2-MHQ) and catechol. Exhibits NADH-dependent 2,6-dichloroindophenol (DCIP) oxidoreductase activity. Functionally, also exhibits azoreductase activity. Catalyzes the reductive cleavage of the azo bond in aromatic azo compounds to the corresponding amines. Can reduce methyl red. The polypeptide is FMN-dependent NADH:quinone oxidoreductase 2 (Bacillus subtilis (strain 168)).